The chain runs to 158 residues: C-type lectin lectoxin-Enh5 (158 aa).

The signal sequence occupies residues 1 to 23 (MGQFTVVSLGLLAVFLSLSGAKG). Disulfide bonds link cysteine 26-cysteine 37, cysteine 54-cysteine 154, and cysteine 129-cysteine 146. One can recognise a C-type lectin domain in the interval 33-155 (RNGVCNKLFP…CASLHPFICQ (123 aa)). The short motif at 119–121 (EPN) is the Mannose-binding element. Positions 127, 142, and 143 each coordinate Ca(2+).

It belongs to the true venom lectin family. As to expression, expressed by the venom gland.

The protein resides in the secreted. Functionally, mannose-binding lectin which recognizes specific carbohydrate structures and agglutinates a variety of animal cells by binding to cell-surface glycoproteins and glycolipids. May be a calcium-dependent lectin. The protein is C-type lectin lectoxin-Enh5 of Pseudoferania polylepis (Macleay's water snake).